The primary structure comprises 454 residues: Histidine--tRNA ligase (454 aa).

It belongs to the class-II aminoacyl-tRNA synthetase family. As to quaternary structure, homodimer.

The protein resides in the cytoplasm. The catalysed reaction is tRNA(His) + L-histidine + ATP = L-histidyl-tRNA(His) + AMP + diphosphate + H(+). The protein is Histidine--tRNA ligase of Phocaeicola vulgatus (strain ATCC 8482 / DSM 1447 / JCM 5826 / CCUG 4940 / NBRC 14291 / NCTC 11154) (Bacteroides vulgatus).